The sequence spans 455 residues: Golgi pH regulator (455 aa).

Helical transmembrane passes span 5-25 (IDSS…WLFF), 46-66 (VTFA…LGVL), 79-99 (LCVI…YFIV), 114-134 (CLLW…FPIL), and 150-170 (VGVI…VNCP). N-linked (GlcNAc...) asparagine glycosylation is found at Asn180 and Asn243. The next 4 helical transmembrane spans lie at 290–310 (GYFF…NIVF), 343–363 (ISFI…LITL), 378–398 (VIVL…VLLI), and 425–445 (WFDV…YLAH).

It belongs to the Golgi pH regulator (TC 1.A.38) family. Homotrimer. Interacts with RABL3; the interaction stabilizes GPR89A.

The protein localises to the golgi apparatus membrane. It carries out the reaction iodide(out) = iodide(in). The catalysed reaction is chloride(in) = chloride(out). It catalyses the reaction bromide(in) = bromide(out). The enzyme catalyses fluoride(in) = fluoride(out). In terms of biological role, voltage-gated channel that enables the transfer of monoatomic anions such as iodide, chloride, bromide and fluoride which may function in counter-ion conductance and participates in Golgi acidification. Plays a role in lymphocyte development, probably by acting as a RABL3 effector in hematopoietic cells. This Bos taurus (Bovine) protein is Golgi pH regulator.